A 128-amino-acid chain; its full sequence is MENVPNVYFNPVFIEPTFKHSLLSVYKHRLIVLFEVFVVFILIYVFFRSELNMFFMPKRKIPDPIDRLRRANLACEDDKLMIYGLPWITTQTSALSINSKPIVYKDCAKLLRSINGSQPVSLNDVLRR.

Residues 1-30 (MENVPNVYFNPVFIEPTFKHSLLSVYKHRL) are Intravirion-facing. Residues 31–51 (IVLFEVFVVFILIYVFFRSEL) form a helical; Signal-anchor for type III membrane protein membrane-spanning segment. Residues 52–128 (NMFFMPKRKI…PVSLNDVLRR (77 aa)) lie on the Virion surface side of the membrane. A disulfide bridge connects residues cysteine 75 and cysteine 107.

This sequence belongs to the orthopoxvirus OPG099 family. In terms of assembly, interacts with OPG086. Component of the entry fusion complex (EFC) composed of OPG053, OPG076, OPG086, OPG094, OPG095, OPG099, OPG107, OPG143, OPG104J5, OPG147 and OPG155. Except for OPG095 and OPG053, each of the EFC proteins is required for assembly or stability of the complex. Most cysteines are linked by disulfide bonds. They are created by the viral disulfide bond formation pathway, a poxvirus-specific redox pathway that operates on the cytoplasmic side of the MV membranes. Post-translationally, unglycosylated because produced in viral factories instead of the classic ER -Golgi route.

It localises to the virion membrane. In terms of biological role, component of the entry fusion complex (EFC), which consists of 11 proteins. During cell infection, this complex mediates entry of the virion core into the host cytoplasm by a two-step mechanism consisting of lipid mixing of the viral and cellular membranes and subsequent pore formation. This is Entry-fusion complex protein OPG094 (OPG099) from Cynomys gunnisoni (Gunnison's prairie dog).